A 381-amino-acid polypeptide reads, in one-letter code: E3 ubiquitin-protein ligase RNF13 (381 aa).

A signal peptide spans 1-34 (MLLSIGMLMLSATQIYTIVTVQLFAFLNLLPVEA). At 35 to 182 (DILAYNFENG…IPEFSLPLEY (148 aa)) the chain is on the lumenal side. The PA domain occupies 64-160 (LKGFLINSKP…GEASANSLKE (97 aa)). N-linked (GlcNAc...) asparagine glycosylation occurs at asparagine 88. A helical membrane pass occupies residues 183–203 (YLIPFLIIVGICLILIVIFMI). The Cytoplasmic segment spans residues 204 to 381 (TKFVQDRHRA…ERDYRVTNTV (178 aa)). The segment at 240 to 282 (CAICLDEYEDGDKLRILPCSHAYHCKCVDPWLTKTKKTCPVCK) adopts an RING-type; atypical zinc-finger fold. The interval 285–381 (VVPSQGDSDS…ERDYRVTNTV (97 aa)) is disordered. 2 stretches are compositionally biased toward acidic residues: residues 292–305 (SDSE…ENEV) and 339–353 (SEYE…DSSD). Over residues 370-381 (NDERDYRVTNTV) the composition is skewed to basic and acidic residues.

Widely expressed (at protein level). Lowest levels in the liver, moderate levels in the heart, intestine and spleen, and high levels in skeletal muscle, kidney, proventriculus and brain. Also expressed in inner ear after noise exposure.

It is found in the endoplasmic reticulum membrane. The protein resides in the late endosome membrane. The protein localises to the lysosome membrane. It localises to the nucleus inner membrane. It catalyses the reaction S-ubiquitinyl-[E2 ubiquitin-conjugating enzyme]-L-cysteine + [acceptor protein]-L-lysine = [E2 ubiquitin-conjugating enzyme]-L-cysteine + N(6)-ubiquitinyl-[acceptor protein]-L-lysine.. Its pathway is protein modification; protein ubiquitination. Its function is as follows. E3 ubiquitin-protein ligase that regulates cell proliferation. Involved in apoptosis regulation. Mediates ER stress-induced activation of JNK signaling pathway and apoptosis by promoting ERN1 activation and splicing of XBP1 mRNA. The sequence is that of E3 ubiquitin-protein ligase RNF13 from Gallus gallus (Chicken).